A 104-amino-acid chain; its full sequence is Urease subunit beta (104 aa).

The protein belongs to the urease beta subunit family. As to quaternary structure, heterotrimer of UreA (gamma), UreB (beta) and UreC (alpha) subunits. Three heterotrimers associate to form the active enzyme.

It is found in the cytoplasm. It carries out the reaction urea + 2 H2O + H(+) = hydrogencarbonate + 2 NH4(+). It functions in the pathway nitrogen metabolism; urea degradation; CO(2) and NH(3) from urea (urease route): step 1/1. In Rhodopseudomonas palustris (strain BisB5), this protein is Urease subunit beta.